We begin with the raw amino-acid sequence, 122 residues long: Large ribosomal subunit protein uL14c (122 aa).

It belongs to the universal ribosomal protein uL14 family. Part of the 50S ribosomal subunit.

The protein resides in the plastid. Functionally, binds to 23S rRNA. This Cuscuta exaltata (Tall dodder) protein is Large ribosomal subunit protein uL14c.